Here is a 193-residue protein sequence, read N- to C-terminus: Orotate phosphoribosyltransferase (193 aa).

117 to 125 provides a ligand contact to 5-phospho-alpha-D-ribose 1-diphosphate; that stretch reads EDVVTTGLS. T121 and R149 together coordinate orotate.

The protein belongs to the purine/pyrimidine phosphoribosyltransferase family. PyrE subfamily. As to quaternary structure, homodimer. The cofactor is Mg(2+).

It carries out the reaction orotidine 5'-phosphate + diphosphate = orotate + 5-phospho-alpha-D-ribose 1-diphosphate. Its pathway is pyrimidine metabolism; UMP biosynthesis via de novo pathway; UMP from orotate: step 1/2. Its function is as follows. Catalyzes the transfer of a ribosyl phosphate group from 5-phosphoribose 1-diphosphate to orotate, leading to the formation of orotidine monophosphate (OMP). The sequence is that of Orotate phosphoribosyltransferase from Erythrobacter litoralis (strain HTCC2594).